We begin with the raw amino-acid sequence, 293 residues long: MAVITAAMVGELRALTDAPMMECKKALTEADGDPVKAEEILRVKLGSKASKAATRVTAEGVVAAYVSGNVGALIEVNCETDFVTKNDDFLGFANTLVKLVAEKNPADVAALSALPLEGKTVEETRAALIGRIGENMSIRRFVRFETTGKLASYLHGTRIGVMVDFEGADEQVGKDVAMHIAAMKPVALSSDNVPADLIAKERSVAELKAAESNKPADIVAKMIEGSVQKYLKEVSLLNQSFVKNDKQTVEQMLKEAKSTVKSFTMFVVGEGIEKKQDDFAAEVAAQVAAAKQA.

The interval 80-83 is involved in Mg(2+) ion dislocation from EF-Tu; that stretch reads TDFV.

It belongs to the EF-Ts family.

The protein resides in the cytoplasm. Functionally, associates with the EF-Tu.GDP complex and induces the exchange of GDP to GTP. It remains bound to the aminoacyl-tRNA.EF-Tu.GTP complex up to the GTP hydrolysis stage on the ribosome. The polypeptide is Elongation factor Ts (Janthinobacterium sp. (strain Marseille) (Minibacterium massiliensis)).